Consider the following 246-residue polypeptide: tRNA pseudouridine synthase A (246 aa).

Asp52 (nucleophile) is an active-site residue. A substrate-binding site is contributed by Tyr111.

The protein belongs to the tRNA pseudouridine synthase TruA family. Homodimer.

The enzyme catalyses uridine(38/39/40) in tRNA = pseudouridine(38/39/40) in tRNA. Formation of pseudouridine at positions 38, 39 and 40 in the anticodon stem and loop of transfer RNAs. The sequence is that of tRNA pseudouridine synthase A from Ehrlichia ruminantium (strain Gardel).